A 175-amino-acid polypeptide reads, in one-letter code: NADH-ubiquinone oxidoreductase chain 6 (175 aa).

A run of 5 helical transmembrane segments spans residues 1-21 (MMTY…VGFA), 25-45 (SPIY…AIVL), 47-67 (FGGS…MLVV), 88-108 (AVLA…CYIL), and 149-169 (YGTW…LVIM).

The protein belongs to the complex I subunit 6 family. In terms of assembly, core subunit of respiratory chain NADH dehydrogenase (Complex I) which is composed of 45 different subunits.

Its subcellular location is the mitochondrion inner membrane. It catalyses the reaction a ubiquinone + NADH + 5 H(+)(in) = a ubiquinol + NAD(+) + 4 H(+)(out). Functionally, core subunit of the mitochondrial membrane respiratory chain NADH dehydrogenase (Complex I) which catalyzes electron transfer from NADH through the respiratory chain, using ubiquinone as an electron acceptor. Essential for the catalytic activity and assembly of complex I. The chain is NADH-ubiquinone oxidoreductase chain 6 (MT-ND6) from Canis lupus familiaris (Dog).